The chain runs to 334 residues: Terpene synthase 1 (334 aa).

Asp-82 and Asp-86 together coordinate Mg(2+). Positions 82–86 (DDIFD) match the D(D/E)XX(D/E) motif motif. Arg-184 contributes to the substrate binding site. Mg(2+) contacts are provided by Asn-230, Ser-234, and Glu-238. Residues 230-238 (NDIYSYHRE) carry the NSE motif motif. Positions 309–316 (WSESCTRY) match the WxxxxxRY motif motif.

Belongs to the terpene synthase family. Requires Mg(2+) as cofactor.

The catalysed reaction is (2E,6E)-farnesyl diphosphate = gamma-muurolene + diphosphate. It carries out the reaction (2E,6E)-farnesyl diphosphate = alpha-muurolene + diphosphate. It catalyses the reaction (2E,6E)-farnesyl diphosphate = (-)-(E)-beta-caryophyllene + diphosphate. The enzyme catalyses (2E)-geranyl diphosphate = beta-myrcene + diphosphate. Terpene synthase that catalyzes the cyclization of farnesyl diphosphate (FPP) into a mixture of sesquiterpenes with gamma-muurolene as the most abundant compound and (-)-beta-caryophyllene, alpha-muurolene, and 4 unidentified sesquiterpenes as minor compoundss. TPS1 also shows monoterpene synthase activity and can also use geranyl diphosphate (GPP) as a substrate to convert it into a mixture of cyclic and acyclic monoterpenes, including myrcene and linalool. P.polycephalum has a unique biology and these volatile terpenoids could function in internal communication of P.polycephalum, to mark the territory that have been explored, or they may be involved in chemotaxis. The protein is Terpene synthase 1 of Physarum polycephalum (Slime mold).